The chain runs to 255 residues: Formate hydrogenlyase subunit 7 (255 aa).

Cys-45, Cys-51, Cys-115, and Cys-145 together coordinate [4Fe-4S] cluster.

The protein belongs to the complex I 20 kDa subunit family. In terms of assembly, FHL comprises of a formate dehydrogenase, unidentified electron carriers and a hydrogenase (isoenzyme 3). In this non-energy conserving pathway molecular hydrogen and carbodioxide from formate are released. [4Fe-4S] cluster serves as cofactor.

This is Formate hydrogenlyase subunit 7 (hycG) from Escherichia coli (strain K12).